The following is a 360-amino-acid chain: Phosphoserine aminotransferase (360 aa).

Arg41 provides a ligand contact to L-glutamate. Residues Trp101, Thr152, Asp172, and Gln195 each contribute to the pyridoxal 5'-phosphate site. The residue at position 196 (Lys196) is an N6-(pyridoxal phosphate)lysine. 237 to 238 is a binding site for pyridoxal 5'-phosphate; it reads NT.

This sequence belongs to the class-V pyridoxal-phosphate-dependent aminotransferase family. SerC subfamily. Homodimer. Pyridoxal 5'-phosphate is required as a cofactor.

The protein resides in the cytoplasm. The enzyme catalyses O-phospho-L-serine + 2-oxoglutarate = 3-phosphooxypyruvate + L-glutamate. It catalyses the reaction 4-(phosphooxy)-L-threonine + 2-oxoglutarate = (R)-3-hydroxy-2-oxo-4-phosphooxybutanoate + L-glutamate. It functions in the pathway amino-acid biosynthesis; L-serine biosynthesis; L-serine from 3-phospho-D-glycerate: step 2/3. Its pathway is cofactor biosynthesis; pyridoxine 5'-phosphate biosynthesis; pyridoxine 5'-phosphate from D-erythrose 4-phosphate: step 3/5. In terms of biological role, catalyzes the reversible conversion of 3-phosphohydroxypyruvate to phosphoserine and of 3-hydroxy-2-oxo-4-phosphonooxybutanoate to phosphohydroxythreonine. In Burkholderia ambifaria (strain MC40-6), this protein is Phosphoserine aminotransferase.